The primary structure comprises 188 residues: NAD(P)H-quinone oxidoreductase subunit J (188 aa).

Over residues 1–12 the composition is skewed to polar residues; that stretch reads MSETPSKQTAAS. The tract at residues 1–23 is disordered; that stretch reads MSETPSKQTAASDETGAVVAPEP.

The protein belongs to the complex I 30 kDa subunit family. In terms of assembly, NDH-1 can be composed of about 15 different subunits; different subcomplexes with different compositions have been identified which probably have different functions.

It localises to the cellular thylakoid membrane. The catalysed reaction is a plastoquinone + NADH + (n+1) H(+)(in) = a plastoquinol + NAD(+) + n H(+)(out). It catalyses the reaction a plastoquinone + NADPH + (n+1) H(+)(in) = a plastoquinol + NADP(+) + n H(+)(out). In terms of biological role, NDH-1 shuttles electrons from an unknown electron donor, via FMN and iron-sulfur (Fe-S) centers, to quinones in the respiratory and/or the photosynthetic chain. The immediate electron acceptor for the enzyme in this species is believed to be plastoquinone. Couples the redox reaction to proton translocation, and thus conserves the redox energy in a proton gradient. Cyanobacterial NDH-1 also plays a role in inorganic carbon-concentration. The protein is NAD(P)H-quinone oxidoreductase subunit J of Synechococcus sp. (strain CC9605).